Here is a 473-residue protein sequence, read N- to C-terminus: Photosystem II CP43 reaction center protein (473 aa).

A propeptide spanning residues M1 to E14 is cleaved from the precursor. T15 carries the post-translational modification N-acetylthreonine. T15 is modified (phosphothreonine). Helical transmembrane passes span L69–A93, L134–N155, K178–T200, K255–S275, and W291–A312. Position 367 (E367) interacts with [CaMn4O5] cluster. A helical membrane pass occupies residues R447–P471.

This sequence belongs to the PsbB/PsbC family. PsbC subfamily. As to quaternary structure, PSII is composed of 1 copy each of membrane proteins PsbA, PsbB, PsbC, PsbD, PsbE, PsbF, PsbH, PsbI, PsbJ, PsbK, PsbL, PsbM, PsbT, PsbX, PsbY, PsbZ, Psb30/Ycf12, at least 3 peripheral proteins of the oxygen-evolving complex and a large number of cofactors. It forms dimeric complexes. It depends on Binds multiple chlorophylls and provides some of the ligands for the Ca-4Mn-5O cluster of the oxygen-evolving complex. It may also provide a ligand for a Cl- that is required for oxygen evolution. PSII binds additional chlorophylls, carotenoids and specific lipids. as a cofactor.

The protein localises to the plastid. It is found in the chloroplast thylakoid membrane. One of the components of the core complex of photosystem II (PSII). It binds chlorophyll and helps catalyze the primary light-induced photochemical processes of PSII. PSII is a light-driven water:plastoquinone oxidoreductase, using light energy to abstract electrons from H(2)O, generating O(2) and a proton gradient subsequently used for ATP formation. The polypeptide is Photosystem II CP43 reaction center protein (Populus trichocarpa (Western balsam poplar)).